A 1262-amino-acid polypeptide reads, in one-letter code: MKITNKSVDKQHIEKLDELRKNVSCTVIGFAEQTAELQQEISELFIAEFGVNGPIDMNSLSKLARITSYYASSEYFQGLAKYQRTACKMFITWQTLRKEAMECRSKDREIFASIPAKLCFFYFYNGELCRAVVCLLDYIDLSDDTLAKEAALRWLMFLGETELIEKKLKTWKMDKSSKDMFSATEFAMNYLKKSEYRVEMLEKLMKLRDKVKSDPTRSFSRYELASYVSWLCSTLSNVPVGSALRECEFPDRVSHIQEAALKSDSLVRNRIPGLASSQFDNSVNASIWPFLDGHQEDSNYYVHIGSTIAWHFEMRRECALVNVTTAQTRDSMSAMILNLRVALKSASFFRVLQTTNTLAYYSSIIEEAGSEKNAKLMRVSCVNLLSSNPIIVRCSTPKETGATSRAHTPMAGSSVSEKQNTMRPDLADLLGDLELLDEQSFHPITRSCVCNVCTIYPLHSSFAAEYMMSYAIHSDFSQLSIKHFNDEFARIRERGMSSQVLMHRDSSVRPRPNIIQNEIFGMCVIRWLTKKLDSKESADEDTMEIFNNALKIVRYLQQRTTDMILAVTQLGRQLEFPMECNYSWMRPTIRKPRVKATIDCAVDILRAVSPFGRRPKVEKLEKNLQPFDKERFEKVRLAMRNEMNHYGHILYREWRCRLFAYVGRTSRDPWEAAYAWAESTQIGARNAVQSRLEKCKRGLVTMSGHDRFKTCVQSMPDEMTLVQIAMADDKTIYLVKLHADRDPIIMPLAHYSQAVELMDKFTFLLDEDEMIAKYPGDITPEEFWKRRKIVDGRMMTFVDEVQKHFLGVAASLLMPSGQLGPKAAELAIKIHKLSKGGLLLGEAKEMVYQSKLMDAKSWEALILRFCEMRTTDEKFKSFLPLMHRNSVEVMNQDDSIVTEKKYTYLVICPHLSQFCWERLPIFDEYPYVGRQVSIHSTFSQLEAMKSQEKQIPLQIDVQNAYYILDPDNNLGETQKRMVEYINKFNWEGTVGSAPKSNEISAALSQRDAFFFIGHGSGSSVMPRSVLKQSTCNAISLLMGCGSVRTIPQALGFDGKTAILDYAMAKCPLIVGCLWTVTDGEIDRFLIRMIDDCFEDSKSLTGIDKLRQLSEAMHEARSKARLKYLTGAAVVMYGLPVVAKQTTPFVEKDQRNLPQTPKTSARTSMRMETVPKTPKQEFVTSKSVPMTPIFSNNENKSPSRARMPSRVLKTPRQVKTFQEEDDEAPKRSTTRQLKPLVAPPIPATPTTRTTRSSARTPSRSRNL.

The 95-residue stretch at 957 to 1051 folds into the Peptidase C50 domain; the sequence is VQNAYYILDP…SVRTIPQALG (95 aa). C1040 is an active-site residue. Residues 1147–1262 form a disordered region; sequence KDQRNLPQTP…ARTPSRSRNL (116 aa). Polar residues-rich tracts occupy residues 1151 to 1162 and 1177 to 1197; these read NLPQTPKTSART and FVTS…NKSP. Residues 1243–1262 show a composition bias toward low complexity; the sequence is TPTTRTTRSSARTPSRSRNL.

In terms of assembly, forms a complex with securin-like protein ify-1 (via C-terminus). Interaction with ify-1 stabilizes sep-1. Also maintains the complex in the cytoplasm during interphase and recruits it to chromosomes during the first meiotic division. In terms of tissue distribution, expressed in oocytes. Expressed in male germline. Expressed in spermatocytes but undetectable in spermatids (at protein level).

The protein resides in the cytoplasm. Its subcellular location is the chromosome. It localises to the cytoplasmic granule. It is found in the cytoskeleton. The protein localises to the microtubule organizing center. The protein resides in the centrosome. Its subcellular location is the spindle. It localises to the cleavage furrow. It is found in the midbody. The enzyme catalyses All bonds known to be hydrolyzed by this endopeptidase have arginine in P1 and an acidic residue in P4. P6 is often occupied by an acidic residue or by a hydroxy-amino-acid residue, the phosphorylation of which enhances cleavage.. Its activity is regulated as follows. Probably maintained in an inactive state via its interaction with securin ify-1 which acts as a pseudosubstrate thereby blocking access to the catalytic site. Upon ify-1 degradation at the onset of anaphase, sep-1 is likely to become active. In addition, interaction with ify-1 stabilizes sep-1. In terms of biological role, cysteine protease, which plays a central role in homologous chromosome separation during meiosis I and in sister chromatid separation during embryonic mitosis. Promotes chromosome/sister chromatid segregation by cleaving the scc-1 (mitosis) and rec-8 (meiosis) subunits of the cohesin complex at the onset of anaphase. May cleave histone H3-like protein cpar-1 during meiosis I metaphase-anaphase transition. Promotes cortical granule exocytosis after oocyte fertilization during the first meiotic anaphase. Essential for embryonic cytokinesis by regulating rab-11-positive vesicle trafficking at the plasma membrane at the cleavage furrow and midbody. Regulates centriole segregation during spermatocyte meiosis. Required for embryonic anterior-posterior axis formation. The protein is Separin homolog sep-1 of Caenorhabditis elegans.